The following is a 504-amino-acid chain: Sodium-coupled neutral amino acid symporter 2 (504 aa).

The segment at 1–28 (MNKAPAQMSRFNIAPDMDSSSTNSNEYT) is disordered. The Cytoplasmic segment spans residues 1-79 (MNKAPAQMSR…SPGSASFGMS (79 aa)). Residues 1–99 (MNKAPAQMSR…SGILGLSYAM (99 aa)) form a regulates protein turnover upon amino acid deprivation region. Positions 19–28 (SSSTNSNEYT) are enriched in low complexity. Residues 80–99 (VFNLGNAIMGSGILGLSYAM) traverse the membrane as a helical segment. Residue asparagine 85 coordinates Na(+). The Extracellular segment spans residues 100–105 (ANTGIA). A helical membrane pass occupies residues 106 to 126 (MFVILLVAVAIFSLYSVHLLL). Residues 127–161 (KTANEGGSLVYEQLGYKAFGIPGKLAASCSITMQN) lie on the Cytoplasmic side of the membrane. A helical transmembrane segment spans residues 162–180 (FGAMASYLYIVKYELPIVI). Residues 181–189 (RAFLDSNDN) are Extracellular-facing. Residues 190–210 (AWYTNGDYLVLIVTMSIILPL) form a helical membrane-spanning segment. At 211 to 218 (SLLKNLGY) the chain is on the cytoplasmic side. A helical membrane pass occupies residues 219–239 (LGYTSGFSLLCMVFFLIVVIY). At 240–285 (KKFQIPCPLPENFINITVNVSQPPQTNNSTDEECCKPKYFIFNSQT) the chain is on the extracellular side. Cysteines 246 and 274 form a disulfide. Asparagine 254 and asparagine 258 each carry an N-linked (GlcNAc...) asparagine glycan. Residues 286 to 306 (VYAVPILTFAFVCHPAILPMY) traverse the membrane as a helical segment. The Cytoplasmic portion of the chain corresponds to 307 to 322 (EELKDRSRRKMQNVAN). A helical transmembrane segment spans residues 323 to 343 (VSFLGMFIMYLLAALFGYLTF). Residues 344–364 (NEAVEPELLHTYSKVYNFDVV) lie on the Extracellular side of the membrane. Residues 365–385 (LLIVRLAVLTAVTLTVPVVLF) form a helical membrane-spanning segment. Threonine 379 serves as a coordination point for Na(+). Residues 386–406 (PIRTSVNHLLGASKEFSWPRH) lie on the Cytoplasmic side of the membrane. The chain crosses the membrane as a helical span at residues 407 to 427 (ICITVALLVCVNILVIFVPTI). Residues 428-429 (RD) are Extracellular-facing. A helical transmembrane segment spans residues 430-450 (IFGFIGASAAAMLIFILPSAF). Residues 451 to 465 (YIKLVKKESMKSVQK) are Cytoplasmic-facing. Residues 466 to 488 (IGATLFLIMGFLVMTGSMALIIM) form a helical membrane-spanning segment. Over 489 to 504 (DWIHNALSSEEHTGGH) the chain is Extracellular.

It belongs to the amino acid/polyamine transporter 2 family.

Its subcellular location is the cell membrane. The enzyme catalyses L-alanine(in) + Na(+)(in) = L-alanine(out) + Na(+)(out). It carries out the reaction glycine(in) + Na(+)(in) = glycine(out) + Na(+)(out). The catalysed reaction is L-serine(in) + Na(+)(in) = L-serine(out) + Na(+)(out). It catalyses the reaction L-proline(in) + Na(+)(in) = L-proline(out) + Na(+)(out). The enzyme catalyses L-methionine(in) + Na(+)(in) = L-methionine(out) + Na(+)(out). It carries out the reaction L-histidine(in) + Na(+)(in) = L-histidine(out) + Na(+)(out). The catalysed reaction is L-asparagine(in) + Na(+)(in) = L-asparagine(out) + Na(+)(out). It catalyses the reaction L-glutamine(in) + Na(+)(in) = L-glutamine(out) + Na(+)(out). The enzyme catalyses L-threonine(in) + Na(+)(in) = L-threonine(out) + Na(+)(out). It carries out the reaction L-leucine(in) + Na(+)(in) = L-leucine(out) + Na(+)(out). The catalysed reaction is L-phenylalanine(in) + Na(+)(in) = L-phenylalanine(out) + Na(+)(out). With respect to regulation, inhibited by N-methyl-D-glucamine. Inhibited by choline. Allosteric regulation of sodium ions binding by pH. In terms of biological role, symporter that cotransports neutral amino acids and sodium ions from the extracellular to the intracellular side of the cell membrane. The transport is pH-sensitive, Li(+)-intolerant, electrogenic, driven by the Na(+) electrochemical gradient and cotransports of neutral amino acids and sodium ions with a stoichiometry of 1:1. This Danio rerio (Zebrafish) protein is Sodium-coupled neutral amino acid symporter 2.